The chain runs to 879 residues: MSVTPMMAQYLEIKAQYPDALLFYRMGDFYEMFFEDAVNAAEALDIALTKRGKHEGEDIPMCGVPVHAAEGYLLTLIRKGFRVAVGEQLESPAEAKKRGSKSVVKRDVVRLVTPGTLTEDSLLEARRHNFLVAYSELRDQAALAWADISTGAFHVMPVARVRLSPELARLAPSELIVADGPIFDATLPLAEEYKIPLTPLGKASFDSTAAEKRLCHLFNVSALDGFGTFNRAEISAMGAVVDYLEITQKGKLPLLQPPLQESEDRTVQIDASTRRNLELTRSLSGGRAGSLLSVVDRTVTPGGARLLEQRLSSPSRNLDVISARLEALDTIVEDPIRCDTLRGLLRKTPDIDRALSRLALDRGGPRDLAAIRNALSQGEDIERALQDPDLPTLLRDAAHSLEGFQDLLSLLDAALIAEPPLLARDGGFIAAGYDRELDEARTLRDEGRSVIAGLQKKYAEHTGISSLKIKHNNVLGYFIETTSTHAAKMQSAPMSDTYIHRQTTANQVRFTTVELSEIETKILNAGNLALEIEKRLYQRLSGAILDSAARLNQAARGFAEIDLVTALADLARAENWTRPRVDTSRAFHVDGGRHPVVEQALRHQGGDSFVANDCDLSPQDGAAIWLLTGPNMAGKSTFLRQNALIAVLAQMGSYVPAEAAHIGMISQLFSRVGASDDLARGRSTFMVEMVETAAILNQADDRALVILDEIGRGTATYDGLSIAWATLEHLHEVNRSRALFATHYHELTQLATKLTGVENATVSVKEWEGEVIFLHEVKKGAADRSYGVQVAQLAGLPASVVARARSVLDMLEKSSREGGGAGKVQIDDLPLFAAAPAPQPKPAQGPSPVEKLLEEIFPDDLTPREALETLYRLKDVSKG.

629 to 636 (GPNMAGKS) is a binding site for ATP.

This sequence belongs to the DNA mismatch repair MutS family.

Its function is as follows. This protein is involved in the repair of mismatches in DNA. It is possible that it carries out the mismatch recognition step. This protein has a weak ATPase activity. This Ruegeria sp. (strain TM1040) (Silicibacter sp.) protein is DNA mismatch repair protein MutS.